The following is a 268-amino-acid chain: HTH-type transcriptional activator RhaS (268 aa).

The HTH araC/xylS-type domain maps to 171–268 (RQMIRWLENN…YSIAPRELRI (98 aa)). 2 DNA-binding regions (H-T-H motif) span residues 188 to 209 (EELAEKFALPIRTLHRYIKSQT) and 236 to 259 (IINIAYDCGFNDSSYFSTCFKNEY).

As to quaternary structure, binds DNA as a dimer.

The protein localises to the cytoplasm. Activates expression of the rhaBAD and rhaT operons. The sequence is that of HTH-type transcriptional activator RhaS from Mannheimia succiniciproducens (strain KCTC 0769BP / MBEL55E).